Here is a 155-residue protein sequence, read N- to C-terminus: Ribosomal RNA large subunit methyltransferase H (155 aa).

S-adenosyl-L-methionine contacts are provided by residues Leu-72, Gly-103, and 122–127; that span reads LSDLTL.

The protein belongs to the RNA methyltransferase RlmH family. As to quaternary structure, homodimer.

It localises to the cytoplasm. The catalysed reaction is pseudouridine(1915) in 23S rRNA + S-adenosyl-L-methionine = N(3)-methylpseudouridine(1915) in 23S rRNA + S-adenosyl-L-homocysteine + H(+). Functionally, specifically methylates the pseudouridine at position 1915 (m3Psi1915) in 23S rRNA. This is Ribosomal RNA large subunit methyltransferase H from Polaromonas naphthalenivorans (strain CJ2).